Consider the following 622-residue polypeptide: Golgin subfamily A member 6-like protein 7 (622 aa).

Disordered regions lie at residues 1–82, 251–496, and 511–580; these read MMSE…QQAL, RKHE…RKQV, and EKMQ…HDNR. 6 stretches are compositionally biased toward basic and acidic residues: residues 57–74, 251–275, 283–332, 339–367, 374–388, and 395–420; these read SPED…ENKA, RKHE…REQE, and EQMR…KQEE. Residues 100-534 adopt a coiled-coil conformation; the sequence is KTELETALHD…EKRREKKERM (435 aa). Residues 477–489 are compositionally biased toward acidic residues; that stretch reads QMGEQEEQMGEQE. 2 stretches are compositionally biased toward basic and acidic residues: residues 511-546 and 567-580; these read EKMQ…ERCS and PARE…HDNR.

It belongs to the GOLGA6 family.

This is Golgin subfamily A member 6-like protein 7 from Homo sapiens (Human).